We begin with the raw amino-acid sequence, 99 residues long: Small ribosomal subunit protein bS20 (99 aa).

Belongs to the bacterial ribosomal protein bS20 family.

In terms of biological role, binds directly to 16S ribosomal RNA. In Caldicellulosiruptor bescii (strain ATCC BAA-1888 / DSM 6725 / KCTC 15123 / Z-1320) (Anaerocellum thermophilum), this protein is Small ribosomal subunit protein bS20.